The following is a 306-amino-acid chain: Aspartate carbamoyltransferase catalytic subunit (306 aa).

The carbamoyl phosphate site is built by Arg-49 and Thr-50. An L-aspartate-binding site is contributed by Lys-77. Residues Arg-99, His-127, and Gln-130 each contribute to the carbamoyl phosphate site. Positions 160 and 211 each coordinate L-aspartate. Ala-250 and Pro-251 together coordinate carbamoyl phosphate.

It belongs to the aspartate/ornithine carbamoyltransferase superfamily. ATCase family. Heterododecamer (2C3:3R2) of six catalytic PyrB chains organized as two trimers (C3), and six regulatory PyrI chains organized as three dimers (R2).

It carries out the reaction carbamoyl phosphate + L-aspartate = N-carbamoyl-L-aspartate + phosphate + H(+). Its pathway is pyrimidine metabolism; UMP biosynthesis via de novo pathway; (S)-dihydroorotate from bicarbonate: step 2/3. Functionally, catalyzes the condensation of carbamoyl phosphate and aspartate to form carbamoyl aspartate and inorganic phosphate, the committed step in the de novo pyrimidine nucleotide biosynthesis pathway. This chain is Aspartate carbamoyltransferase catalytic subunit, found in Bacillus licheniformis (strain ATCC 14580 / DSM 13 / JCM 2505 / CCUG 7422 / NBRC 12200 / NCIMB 9375 / NCTC 10341 / NRRL NRS-1264 / Gibson 46).